Here is a 408-residue protein sequence, read N- to C-terminus: Argininosuccinate synthase (408 aa).

Residues 10–18 and A37 contribute to the ATP site; that span reads AYSGGLDTS. L-citrulline-binding residues include Y90 and S95. Position 120 (G120) interacts with ATP. Residues T122, N126, and D127 each contribute to the L-aspartate site. Residue N126 participates in L-citrulline binding. L-citrulline contacts are provided by R130, S182, S191, E267, and Y279.

This sequence belongs to the argininosuccinate synthase family. Type 1 subfamily. In terms of assembly, homotetramer.

The protein localises to the cytoplasm. It catalyses the reaction L-citrulline + L-aspartate + ATP = 2-(N(omega)-L-arginino)succinate + AMP + diphosphate + H(+). Its pathway is amino-acid biosynthesis; L-arginine biosynthesis; L-arginine from L-ornithine and carbamoyl phosphate: step 2/3. This is Argininosuccinate synthase from Paraburkholderia xenovorans (strain LB400).